A 615-amino-acid chain; its full sequence is UvrABC system protein C (615 aa).

Residues 14–91 (TSPGCYIHKD…IKENKPKYNI (78 aa)) enclose the GIY-YIG domain. The region spanning 196-231 (NKIIDELKGKMAAAAQTMEFERAAEYRDLIQAIGTL) is the UVR domain.

Belongs to the UvrC family. Interacts with UvrB in an incision complex.

The protein localises to the cytoplasm. Its function is as follows. The UvrABC repair system catalyzes the recognition and processing of DNA lesions. UvrC both incises the 5' and 3' sides of the lesion. The N-terminal half is responsible for the 3' incision and the C-terminal half is responsible for the 5' incision. The protein is UvrABC system protein C of Streptococcus pneumoniae (strain ATCC 700669 / Spain 23F-1).